Reading from the N-terminus, the 239-residue chain is Tryptophan synthase alpha chain (239 aa).

Catalysis depends on proton acceptor residues E34 and D45.

The protein belongs to the TrpA family. As to quaternary structure, tetramer of two alpha and two beta chains.

The enzyme catalyses (1S,2R)-1-C-(indol-3-yl)glycerol 3-phosphate + L-serine = D-glyceraldehyde 3-phosphate + L-tryptophan + H2O. The protein operates within amino-acid biosynthesis; L-tryptophan biosynthesis; L-tryptophan from chorismate: step 5/5. In terms of biological role, the alpha subunit is responsible for the aldol cleavage of indoleglycerol phosphate to indole and glyceraldehyde 3-phosphate. This is Tryptophan synthase alpha chain from Thermotoga petrophila (strain ATCC BAA-488 / DSM 13995 / JCM 10881 / RKU-1).